We begin with the raw amino-acid sequence, 226 residues long: ATP-dependent dethiobiotin synthetase BioD (226 aa).

14–19 (GIGKTF) is an ATP binding site. Threonine 18 lines the Mg(2+) pocket. Lysine 39 is a catalytic residue. Serine 43 lines the substrate pocket. ATP is bound by residues aspartate 56, 117-120 (EGVG), 177-178 (NT), 206-208 (PHI), and asparagine 213. Mg(2+) contacts are provided by aspartate 56 and glutamate 117.

It belongs to the dethiobiotin synthetase family. In terms of assembly, homodimer. Mg(2+) is required as a cofactor.

It is found in the cytoplasm. It carries out the reaction (7R,8S)-7,8-diammoniononanoate + CO2 + ATP = (4R,5S)-dethiobiotin + ADP + phosphate + 3 H(+). It participates in cofactor biosynthesis; biotin biosynthesis; biotin from 7,8-diaminononanoate: step 1/2. Functionally, catalyzes a mechanistically unusual reaction, the ATP-dependent insertion of CO2 between the N7 and N8 nitrogen atoms of 7,8-diaminopelargonic acid (DAPA, also called 7,8-diammoniononanoate) to form a ureido ring. In Xylella fastidiosa (strain M12), this protein is ATP-dependent dethiobiotin synthetase BioD.